An 864-amino-acid chain; its full sequence is Leucine--tRNA ligase (864 aa).

The short motif at 42-52 is the 'HIGH' region element; that stretch reads PYPSGKLHMGH. Positions 624–628 match the 'KMSKS' region motif; sequence KMSKS. Lysine 627 lines the ATP pocket.

It belongs to the class-I aminoacyl-tRNA synthetase family.

Its subcellular location is the cytoplasm. The catalysed reaction is tRNA(Leu) + L-leucine + ATP = L-leucyl-tRNA(Leu) + AMP + diphosphate. This is Leucine--tRNA ligase from Burkholderia multivorans (strain ATCC 17616 / 249).